Consider the following 479-residue polypeptide: Anaerobic nitric oxide reductase flavorubredoxin (479 aa).

The zinc metallo-hydrolase stretch occupies residues 30-210 (LRGSSYNSYL…PFSRLVTPKI (181 aa)). Positions 79, 81, 83, 147, 166, and 227 each coordinate Fe cation. One can recognise a Flavodoxin-like domain in the interval 254 to 393 (ITIFYDTMSN…LCREHGREIA (140 aa)). FMN is bound by residues 260–264 (TMSNN) and 342–369 (AFGS…EMSL). Residues 423-474 (GPRMQCSVCQWIYDPAKGEPMQDVAPGTPWSEVPDNFLCPECSLGKDVFDEL) form the Rubredoxin-like domain. Residues cysteine 428, cysteine 431, cysteine 461, and cysteine 464 each contribute to the Fe cation site.

This sequence in the N-terminal section; belongs to the zinc metallo-hydrolase group 3 family. As to quaternary structure, homotetramer. Requires Fe cation as cofactor. FMN is required as a cofactor.

Its subcellular location is the cytoplasm. It participates in nitrogen metabolism; nitric oxide reduction. Its function is as follows. Anaerobic nitric oxide reductase; uses NADH to detoxify nitric oxide (NO), protecting several 4Fe-4S NO-sensitive enzymes. Has at least 2 reductase partners, only one of which (NorW, flavorubredoxin reductase) has been identified. NO probably binds to the di-iron center; electrons enter from the NorW at rubredoxin and are transferred sequentially to the FMN center and the di-iron center. Also able to function as an aerobic oxygen reductase. This Escherichia coli O6:H1 (strain CFT073 / ATCC 700928 / UPEC) protein is Anaerobic nitric oxide reductase flavorubredoxin.